The following is a 470-amino-acid chain: Desmin (470 aa).

The tract at residues 2 to 108 (SQAYSSSQRV…QEFLTTRTNE (107 aa)) is head. A Phosphoserine; by CDK1 modification is found at Ser-7. Position 12 is a phosphoserine; by AURKB (Ser-12). Omega-N-methylarginine is present on Arg-16. Position 17 is a phosphothreonine; by AURKB and ROCK1 (Thr-17). Ser-28 carries the phosphoserine; by CDK1 modification. The residue at position 31 (Ser-31) is a Phosphoserine. At Ser-32 the chain carries Phosphoserine; by CDK1. An Asymmetric dimethylarginine; alternate modification is found at Arg-37. Arg-37 carries the omega-N-methylarginine; alternate modification. Ser-45 carries the post-translational modification Phosphoserine. The residue at position 58 (Arg-58) is an ADP-ribosylarginine. Ser-60 bears the Phosphoserine; by AURKB mark. The residue at position 68 (Ser-68) is a Phosphoserine. The residue at position 70 (Arg-70) is an Omega-N-methylarginine. A phosphothreonine; by ROCK1 mark is found at Thr-76 and Thr-77. Ser-81 carries the phosphoserine modification. The 309-residue stretch at 108 to 416 (EKVELQELND…KLLEGEESRI (309 aa)) folds into the IF rod domain. A coil 1A region spans residues 109-141 (KVELQELNDRFANYIEKVRFLEQQNAALAAEVN). A linker 1 region spans residues 142-151 (RLKGREPTRV). A coil 1B region spans residues 152 to 252 (AELYEEELRE…HEEEIRELQA (101 aa)). Positions 253 to 268 (QLQEQQVQVEMDMSKP) are linker 12. Positions 268–415 (PDLTAALRDI…RKLLEGEESR (148 aa)) are interaction with NEB. The interval 269–287 (DLTAALRDIRAQYETIAAK) is coil 2A. A linker 2 region spans residues 288-295 (NISEAEEW). Residues Ser-290, Ser-358, Ser-361, and Ser-424 each carry the phosphoserine modification. Residues 296-412 (YKSKVSDLTQ…ATYRKLLEGE (117 aa)) are coil 2B. The tail stretch occupies residues 413-470 (ESRINLPIQTYSALNFRETSPEQRGSEVHTKKTVMIKTIETRDGEVVSEATQQQHEVL). The interaction with CRYAB stretch occupies residues 438–453 (SEVHTKKTVMIKTIET).

This sequence belongs to the intermediate filament family. In terms of assembly, homomer. Interacts with DST. Interacts with MTM1. Interacts with EPPK1; interaction is dependent of higher-order structure of intermediate filament. Interacts with CRYAB. Interacts with NEB (via nebulin repeats 160-164). Interacts (via rod region) with NEBL (via nebulin repeats 1-5). Interacts with ASB2 isoform 1; the interaction targets DES for proteasomal degradation. Interacts with PLEC isoform 1C. Interacts with PKP1. Interacts with FLII. ADP-ribosylation prevents ability to form intermediate filaments. Post-translationally, phosphorylation at Ser-7, Ser-28 and Ser-32 by CDK1, phosphorylation at Ser-60 by AURKB and phosphorylation at Thr-76 by ROCK1 contribute to efficient separation of desmin intermediate filaments during mitosis. In terms of processing, ubiquitination by a SCF-like complex containing ASB2 isoform 1 leads to proteasomal degradation.

Its subcellular location is the cytoplasm. The protein resides in the myofibril. It is found in the sarcomere. It localises to the z line. The protein localises to the cell membrane. Its subcellular location is the sarcolemma. The protein resides in the nucleus. It is found in the cell tip. It localises to the nucleus envelope. In terms of biological role, muscle-specific type III intermediate filament essential for proper muscular structure and function. Plays a crucial role in maintaining the structure of sarcomeres, inter-connecting the Z-disks and forming the myofibrils, linking them not only to the sarcolemmal cytoskeleton, but also to the nucleus and mitochondria, thus providing strength for the muscle fiber during activity. In adult striated muscle they form a fibrous network connecting myofibrils to each other and to the plasma membrane from the periphery of the Z-line structures. May act as a sarcomeric microtubule-anchoring protein: specifically associates with detyrosinated tubulin-alpha chains, leading to buckled microtubules and mechanical resistance to contraction. Required for nuclear membrane integrity, via anchoring at the cell tip and nuclear envelope, resulting in maintenance of microtubule-derived intracellular mechanical forces. Contributes to the transcriptional regulation of the NKX2-5 gene in cardiac progenitor cells during a short period of cardiomyogenesis and in cardiac side population stem cells in the adult. Plays a role in maintaining an optimal conformation of nebulette (NEB) on heart muscle sarcomeres to bind and recruit cardiac alpha-actin. The chain is Desmin (DES) from Homo sapiens (Human).